The primary structure comprises 367 residues: MLAELHEELETIRERFANLRGHLDLAAKQAEIEQLEVRASDPELWNTPRVAQELMQRLTRLKEEVALWNDLDHRMTSLAELIELAEQEGDESLAADLAAELRAVQREVAQRELEILLSGPYDDRDAFLSIQAGMGGTDAQDWAAMLLRMYTRWAERRGYTVNLIDLSEGEEAGIKSATIEIRGPYAYGYARAEAGVHRLIRLSPFNAAHTRQTSFARVEVMPEVDDAPEVEIKPEDLRIDVFRSGGHGGQGVNTTDSAVRITHLPTGIVVTCQNERSQIQNRETALRVLRARLLERELQRQAEERARLRGEYREAAFGNQMRTYYLHPSTLVKDHRTDYETSNVQAVLDGEIDPFIEAFLRANVRES.

Gln-250 bears the N5-methylglutamine mark.

The protein belongs to the prokaryotic/mitochondrial release factor family. Post-translationally, methylated by PrmC. Methylation increases the termination efficiency of RF2.

It is found in the cytoplasm. Its function is as follows. Peptide chain release factor 2 directs the termination of translation in response to the peptide chain termination codons UGA and UAA. The sequence is that of Peptide chain release factor 2 from Chloroflexus aggregans (strain MD-66 / DSM 9485).